The following is a 172-amino-acid chain: Adenine phosphoribosyltransferase (172 aa).

The protein belongs to the purine/pyrimidine phosphoribosyltransferase family. In terms of assembly, homodimer.

The protein localises to the cytoplasm. It catalyses the reaction AMP + diphosphate = 5-phospho-alpha-D-ribose 1-diphosphate + adenine. Its pathway is purine metabolism; AMP biosynthesis via salvage pathway; AMP from adenine: step 1/1. Its function is as follows. Catalyzes a salvage reaction resulting in the formation of AMP, that is energically less costly than de novo synthesis. The protein is Adenine phosphoribosyltransferase of Microcystis aeruginosa (strain NIES-843 / IAM M-2473).